Consider the following 161-residue polypeptide: UPF0303 protein Spro_1996 (161 aa).

Belongs to the UPF0303 family.

The sequence is that of UPF0303 protein Spro_1996 from Serratia proteamaculans (strain 568).